The following is a 304-amino-acid chain: Large ribosomal subunit protein uL2 (304 aa).

The disordered stretch occupies residues 246-282; it reads HTRGTAMNPVDHPHGGGEGRTRGKHPESPWGWKTKGY. Residues 256-272 show a composition bias toward basic and acidic residues; that stretch reads DHPHGGGEGRTRGKHPE.

This sequence belongs to the universal ribosomal protein uL2 family. As to quaternary structure, part of the 50S ribosomal subunit. Forms a bridge to the 30S subunit in the 70S ribosome.

In terms of biological role, one of the primary rRNA binding proteins. Required for association of the 30S and 50S subunits to form the 70S ribosome, for tRNA binding and peptide bond formation. It has been suggested to have peptidyltransferase activity; this is somewhat controversial. Makes several contacts with the 16S rRNA in the 70S ribosome. In Aquifex aeolicus (strain VF5), this protein is Large ribosomal subunit protein uL2.